Here is a 146-residue protein sequence, read N- to C-terminus: Holo-[acyl-carrier-protein] synthase (146 aa).

The Mg(2+) site is built by aspartate 9 and glutamate 58.

It belongs to the P-Pant transferase superfamily. AcpS family. Requires Mg(2+) as cofactor.

It localises to the cytoplasm. It catalyses the reaction apo-[ACP] + CoA = holo-[ACP] + adenosine 3',5'-bisphosphate + H(+). In terms of biological role, transfers the 4'-phosphopantetheine moiety from coenzyme A to a Ser of acyl-carrier-protein. The protein is Holo-[acyl-carrier-protein] synthase of Baumannia cicadellinicola subsp. Homalodisca coagulata.